We begin with the raw amino-acid sequence, 488 residues long: MIMIITKKTLLPVTLALFSSGVMAHGYVSSVEGGVAESRAALCKFPANGTGEKNTNCGSVQWEPQSVEGPDGFPETGPPDGKIASAGLSQFSPLDEQTVDRWVKRPMQAGIQNFEWTFTANHITRNWRYYITKQDWNPNKSLTRSAFDLTPFCQISGDMAKPPMRVHHSCNVPERKDYQVILAVWEVGDTAASFYNVIDVMFDGDLPTVPDWAVGGQIYPSMDLKSGDSVYTRVFDASGENSALSTELTIETEQQGQANNWSYSLAQQINNVYDNIRAGKADGEGNFAPIYGANPIYLKEGSGLERVEIGYNIITPEPDHDLDISGLENEYQIGDEPVSLELNLTAQGDQFVELTVYNHNKEALANKQVTLNDGDSQAVSMRLSKSEPGHHMLVTRIKDSSEGSLIDQITNDFHLTEGGDPPEGDYDYIFPEGLKSYTAGSKVLATDGRIYECKPFPYSGYCIQWSPSATQFEPGVGSDWSTAWIKLN.

Positions 1-24 (MIMIITKKTLLPVTLALFSSGVMA) are cleaved as a signal peptide. The region spanning 25-202 (HGYVSSVEGG…SFYNVIDVMF (178 aa)) is the Chitin-binding type-4 domain. In terms of domain architecture, Chitin-binding type-3 spans 439–480 (AGSKVLATDGRIYECKPFPYSGYCIQWSPSATQFEPGVGSDW).

Belongs to the GbpA family.

The protein resides in the secreted. Its function is as follows. Probably interacts with GlcNAc residues. May promote attachment to both epithelial cell surfaces and chitin. This chain is GlcNAc-binding protein A, found in Photobacterium profundum (strain SS9).